The primary structure comprises 213 residues: KHG/KDPG aldolase (213 aa).

Residue Glu-45 is the Proton acceptor of the active site. Pyruvate-binding residues include Arg-49, Thr-73, and Lys-133. Lys-133 acts as the Schiff-base intermediate with substrate in catalysis.

It belongs to the KHG/KDPG aldolase family. As to quaternary structure, homotrimer.

It is found in the cytoplasm. It catalyses the reaction 2-dehydro-3-deoxy-6-phospho-D-gluconate = D-glyceraldehyde 3-phosphate + pyruvate. The catalysed reaction is (4S)-4-hydroxy-2-oxoglutarate = glyoxylate + pyruvate. The protein operates within carbohydrate acid metabolism; 2-dehydro-3-deoxy-D-gluconate degradation; D-glyceraldehyde 3-phosphate and pyruvate from 2-dehydro-3-deoxy-D-gluconate: step 2/2. Its pathway is carbohydrate metabolism; glyoxylate and dicarboxylate metabolism. In terms of biological role, involved in the degradation of glucose via the Entner-Doudoroff pathway. Catalyzes the reversible, stereospecific retro-aldol cleavage of 2-keto-3-deoxy-6-phosphogluconate (KDPG) to pyruvate and D-glyceraldehyde-3-phosphate. In addition to its KDPG aldolase activity, catalyzes the reversible cleavage of 2-keto-4-hydroxyglutarate (KHG) to glyoxylate and pyruvate. The enzyme is stereoselective for the S-enantiomer of KHG. Cleavage of KHG could serve in tricarboxylic acid (TCA) cycle regulation or, when operating in the reverse direction, in the detoxification of glyoxylate. The protein is KHG/KDPG aldolase (eda) of Escherichia coli O157:H7.